The chain runs to 510 residues: MVKHDSEVELSEEDFYMQRVSMVRKEMKEGASMYPHKFQISHSFQEILQEIEKTSTQFVGEDVVRSAGRIMSMRLHARFCFFVVTSNGESLQVVVDTKEAGREQMAKFLRRGDVVGFTGNPGRTRTLEASVFATDIIVLTPCLRTIPTEHFGLKDPETIYRKRYMDLLINRESRNRFQKRAQIIGYIRSFLDSRGFLEVETPMMNLIPGGAAAKPFITHHNELKLDLYMRVSPELYLKKLVVGGLERVYEIGKQFRNEGIDLTHNPEFTSCEFYMAYADYNDLMEMTEELISGMVENMFGTDTIVYSPKKREERTESVELSFKRPFRVISILEELNARLGLDLSGETLDREETLEKLLSACDKEGLSVEKPRTLSRVLDKLIGHVIEPQCVNPTFVKDHPIAMSPLAKNHRSKAGLTERFELFINCKEICNAYTELNNPFEQRERFLQQTQDLNAGDDEAMMNDEDFCTALEYGLPPTGGWGIGIDRLVMYLTDAANIRDVIFFPTMKPE.

The protein belongs to the class-II aminoacyl-tRNA synthetase family. In terms of assembly, homodimer.

It localises to the cytoplasm. It catalyses the reaction tRNA(Lys) + L-lysine + ATP = L-lysyl-tRNA(Lys) + AMP + diphosphate. In Encephalitozoon cuniculi (strain GB-M1) (Microsporidian parasite), this protein is Probable lysine--tRNA ligase, cytoplasmic.